The sequence spans 264 residues: Galectin-3 (264 aa).

The tract at residues 1 to 105 is disordered; sequence MADSFSLNDA…GAFPGQPGAP (105 aa). Ala-2 carries the N-acetylalanine modification. Ser-6 is modified (phosphoserine; by CK1). 8 repeat units span residues 35–43, 44–52, 53–61, 62–70, 71–79, 80–88, 89–97, and 98–107. A 9 X 9 AA tandem repeats of Y-P-G-X(3)-P-[GS]-A region spans residues 35 to 114; sequence YPGAAYPGAY…PGAYPQCSGG (80 aa). A compositionally biased stretch (low complexity) spans 37 to 46; it reads GAAYPGAYPG. A compositionally biased stretch (pro residues) spans 47 to 75; sequence QAPPGAYPGQAPPGAYPGQAPPSAYPGPT. The span at 76 to 105 shows a compositional bias: low complexity; that stretch reads APGAYPGPTAPGAYPGQPAPGAFPGQPGAP. Residues 108 to 114 form a 9; truncated repeat; the sequence is YPQCSGG. A Galectin domain is found at 132–262; that stretch reads YDLPLPGGVM…DITLTSANHA (131 aa). 195–201 provides a ligand contact to a beta-D-galactoside; it reads WGKEERQ. Ser-202 bears the Phosphoserine mark. The Nuclear export signal signature appears at 240 to 255; the sequence is KNLREISQLGISGDIT.

In terms of assembly, probably forms homo- or heterodimers. Interacts with DMBT1. Interacts with CD6 and ALCAM. Forms a complex with the ITGA3, ITGB1 and CSPG4. Interacts with LGALS3BP, LYPD3, ZFTRAF1 and UACA. Interacts with TRIM16; this interaction mediates autophagy of damage endomembranes. Interacts with and inhibits by binding NCR3/NKp30. The highest levels are found in activated macrophages.

It is found in the cytoplasm. The protein resides in the nucleus. It localises to the secreted. Its function is as follows. Galactose-specific lectin which binds IgE. May mediate with the alpha-3, beta-1 integrin the stimulation by CSPG4 of endothelial cells migration. Together with DMBT1, required for terminal differentiation of columnar epithelial cells during early embryogenesis. In the nucleus: acts as a pre-mRNA splicing factor. Involved in acute inflammatory responses including neutrophil activation and adhesion, chemoattraction of monocytes macrophages, opsonization of apoptotic neutrophils, and activation of mast cells. Together with TRIM16, coordinates the recognition of membrane damage with mobilization of the core autophagy regulators ATG16L1 and BECN1 in response to damaged endomembranes. When secreted, interacts with NK cell-activating receptor NCR3/NKp30 acting as an inhibitory ligand which antagonizes NK cell attack. This Mus musculus (Mouse) protein is Galectin-3 (Lgals3).